A 527-amino-acid polypeptide reads, in one-letter code: Calcium and calcium/calmodulin-dependent serine/threonine-protein kinase (527 aa).

A Protein kinase domain is found at tyrosine 12 to valine 314. Leucine 18–valine 26 is a binding site for ATP. A disordered region spans residues valine 25–glutamine 51. The segment covering glutamine 41–glutamine 51 has biased composition (low complexity). ATP is bound at residue lysine 55. Residues arginine 59 to glutamate 78 are disordered. Catalysis depends on aspartate 179, which acts as the Proton acceptor. A helical membrane pass occupies residues methionine 239–proline 255. At threonine 279 the chain carries Phosphothreonine. Residues alanine 337 to tryptophan 350 form a calmodulin-binding region. A coiled-coil region spans residues threonine 358–arginine 379. 3 consecutive EF-hand domains span residues serine 408 to serine 443, lysine 444 to aspartate 479, and threonine 486 to leucine 521. Residues aspartate 421, asparagine 423, aspartate 425, threonine 427, glutamate 432, aspartate 457, aspartate 459, serine 461, cysteine 463, glutamate 468, aspartate 499, asparagine 501, aspartate 503, lysine 505, and glutamate 510 each coordinate Ca(2+).

This sequence belongs to the protein kinase superfamily. CAMK Ser/Thr protein kinase family. CaMK subfamily. In terms of processing, autophosphorylation.

Its subcellular location is the membrane. It carries out the reaction L-seryl-[protein] + ATP = O-phospho-L-seryl-[protein] + ADP + H(+). The enzyme catalyses L-threonyl-[protein] + ATP = O-phospho-L-threonyl-[protein] + ADP + H(+). Its activity is regulated as follows. Activated by calcium. Autophosphorylation may play an important role in the regulation of the kinase activity. Protein kinase that recognizes the calcium spiking induced by Nod factors and translates this signal to components controlling nodulation and mycorrhizal infection responses. The chain is Calcium and calcium/calmodulin-dependent serine/threonine-protein kinase (SYM9) from Pisum sativum (Garden pea).